The chain runs to 657 residues: Translation factor GUF1, mitochondrial (657 aa).

The transit peptide at 1–39 (MRGCLQSVKWLTSALRPSQSLASSTRYPRRLLSTSAPRN) directs the protein to the mitochondrion. One can recognise a tr-type G domain in the interval 59–239 (ERFRNFCIVA…TVIEQIPAPV (181 aa)). GTP contacts are provided by residues 68 to 75 (AHVDHGKS), 132 to 136 (DTPGH), and 186 to 189 (NKVD).

The protein belongs to the TRAFAC class translation factor GTPase superfamily. Classic translation factor GTPase family. LepA subfamily.

Its subcellular location is the mitochondrion inner membrane. The enzyme catalyses GTP + H2O = GDP + phosphate + H(+). Promotes mitochondrial protein synthesis. May act as a fidelity factor of the translation reaction, by catalyzing a one-codon backward translocation of tRNAs on improperly translocated ribosomes. Binds to mitochondrial ribosomes in a GTP-dependent manner. This is Translation factor GUF1, mitochondrial from Ajellomyces capsulatus (strain G186AR / H82 / ATCC MYA-2454 / RMSCC 2432) (Darling's disease fungus).